Reading from the N-terminus, the 221-residue chain is uncharacterized protein (221 aa).

Residues 1–30 (MAKFNNNILLIILIIVILFIIFYFLNKNNQ) form the signal peptide.

The protein localises to the virion. This is an uncharacterized protein from Acanthamoeba polyphaga mimivirus (APMV).